A 945-amino-acid polypeptide reads, in one-letter code: Isoleucine--tRNA ligase (945 aa).

The short motif at 66 to 76 is the 'HIGH' region element; the sequence is PYANGDIHLGH. Glutamate 581 contributes to the L-isoleucyl-5'-AMP binding site. A 'KMSKS' region motif is present at residues 622 to 626; the sequence is KMSKS. Residue lysine 625 coordinates ATP. Residues cysteine 908, cysteine 911, cysteine 928, and cysteine 931 each contribute to the Zn(2+) site.

It belongs to the class-I aminoacyl-tRNA synthetase family. IleS type 1 subfamily. In terms of assembly, monomer. Requires Zn(2+) as cofactor.

The protein localises to the cytoplasm. It carries out the reaction tRNA(Ile) + L-isoleucine + ATP = L-isoleucyl-tRNA(Ile) + AMP + diphosphate. In terms of biological role, catalyzes the attachment of isoleucine to tRNA(Ile). As IleRS can inadvertently accommodate and process structurally similar amino acids such as valine, to avoid such errors it has two additional distinct tRNA(Ile)-dependent editing activities. One activity is designated as 'pretransfer' editing and involves the hydrolysis of activated Val-AMP. The other activity is designated 'posttransfer' editing and involves deacylation of mischarged Val-tRNA(Ile). The sequence is that of Isoleucine--tRNA ligase from Burkholderia ambifaria (strain ATCC BAA-244 / DSM 16087 / CCUG 44356 / LMG 19182 / AMMD) (Burkholderia cepacia (strain AMMD)).